Here is a 260-residue protein sequence, read N- to C-terminus: UPF0294 protein plu0699 (260 aa).

This sequence belongs to the UPF0294 family.

The protein localises to the cytoplasm. In Photorhabdus laumondii subsp. laumondii (strain DSM 15139 / CIP 105565 / TT01) (Photorhabdus luminescens subsp. laumondii), this protein is UPF0294 protein plu0699.